Reading from the N-terminus, the 455-residue chain is Ribulose bisphosphate carboxylase large chain (455 aa).

The residue at position 5 (Lys5) is an N6,N6,N6-trimethyllysine. Residues Asn114 and Thr164 each contribute to the substrate site. Lys166 serves as the catalytic Proton acceptor. Lys168 is a substrate binding site. Lys192, Asp194, and Glu195 together coordinate Mg(2+). N6-carboxylysine is present on Lys192. His285 functions as the Proton acceptor in the catalytic mechanism. Arg286, His318, and Ser370 together coordinate substrate.

Belongs to the RuBisCO large chain family. Type I subfamily. Heterohexadecamer of 8 large chains and 8 small chains; disulfide-linked. The disulfide link is formed within the large subunit homodimers. Mg(2+) is required as a cofactor. The disulfide bond which can form in the large chain dimeric partners within the hexadecamer appears to be associated with oxidative stress and protein turnover.

It is found in the plastid. The protein resides in the chloroplast. The catalysed reaction is 2 (2R)-3-phosphoglycerate + 2 H(+) = D-ribulose 1,5-bisphosphate + CO2 + H2O. It catalyses the reaction D-ribulose 1,5-bisphosphate + O2 = 2-phosphoglycolate + (2R)-3-phosphoglycerate + 2 H(+). Its function is as follows. RuBisCO catalyzes two reactions: the carboxylation of D-ribulose 1,5-bisphosphate, the primary event in carbon dioxide fixation, as well as the oxidative fragmentation of the pentose substrate in the photorespiration process. Both reactions occur simultaneously and in competition at the same active site. The chain is Ribulose bisphosphate carboxylase large chain from Lupinus cosentinii (West Australian blue lupine).